The following is a 99-amino-acid chain: Protein Tat (99 aa).

The disordered stretch occupies residues 1–22 (MDPVDPNLEPWNHPGSQPRTPC). Residues 1-24 (MDPVDPNLEPWNHPGSQPRTPCNK) are interaction with human CREBBP. Positions 1–48 (MDPVDPNLEPWNHPGSQPRTPCNKCHCKKCCYHCPVCFLNKGLGISYG) are transactivation. Residues Cys-22, Cys-25, and Cys-27 each coordinate Zn(2+). The interval 22-37 (CNKCHCKKCCYHCPVC) is cysteine-rich. Position 28 is an N6-acetyllysine; by host PCAF (Lys-28). 4 residues coordinate Zn(2+): Cys-30, His-33, Cys-34, and Cys-37. A core region spans residues 38–48 (FLNKGLGISYG). Positions 48-99 (GRKKRRQRRGPPQGGQAHQVPIPKQPSSQPRGDPTGPKEQKKKVESEAETDP) are disordered. The Nuclear localization signal, RNA-binding (TAR), and protein transduction motif lies at 49–57 (RKKRRQRRG). Residues 49–86 (RKKRRQRRGPPQGGQAHQVPIPKQPSSQPRGDPTGPKE) form an interaction with the host capping enzyme RNGTT region. Lys-50 and Lys-51 each carry N6-acetyllysine; by host EP300 and GCN5L2. 2 positions are modified to asymmetric dimethylarginine; by host PRMT6: Arg-52 and Arg-53. Lys-71 is covalently cross-linked (Glycyl lysine isopeptide (Lys-Gly) (interchain with G-Cter in ubiquitin)). Positions 78-80 (RGD) match the Cell attachment site motif. Residues 83–93 (GPKEQKKKVES) are compositionally biased toward basic and acidic residues.

The protein belongs to the lentiviruses Tat family. In terms of assembly, interacts with host CCNT1. Associates with the P-TEFb complex composed at least of Tat, P-TEFb (CDK9 and CCNT1), TAR RNA, RNA Pol II. Recruits the HATs CREBBP, TAF1/TFIID, EP300, PCAF and GCN5L2. Interacts with host KAT5/Tip60; this interaction targets the latter to degradation. Interacts with the host deacetylase SIRT1. Interacts with host capping enzyme RNGTT; this interaction stimulates RNGTT. Binds to host KDR, and to the host integrins ITGAV/ITGB3 and ITGA5/ITGB1. Interacts with host KPNB1/importin beta-1 without previous binding to KPNA1/importin alpha-1. Interacts with EIF2AK2. Interacts with host nucleosome assembly protein NAP1L1; this interaction may be required for the transport of Tat within the nucleus, since the two proteins interact at the nuclear rim. Interacts with host C1QBP/SF2P32; this interaction involves lysine-acetylated Tat. Interacts with the host chemokine receptors CCR2, CCR3 and CXCR4. Interacts with host DPP4/CD26; this interaction may trigger an anti-proliferative effect. Interacts with host LDLR. Interacts with the host extracellular matrix metalloproteinase MMP1. Interacts with host PRMT6; this interaction mediates Tat's methylation. Interacts with, and is ubiquitinated by MDM2/Hdm2. Interacts with host PSMC3 and HTATIP2. Interacts with STAB1; this interaction may overcome SATB1-mediated repression of IL2 and IL2RA (interleukin) in T cells by binding to the same domain than HDAC1. Interacts (when acetylated) with human CDK13, thereby increasing HIV-1 mRNA splicing and promoting the production of the doubly spliced HIV-1 protein Nef. Interacts with host TBP; this interaction modulates the activity of transcriptional pre-initiation complex. Interacts with host RELA. Interacts with host PLSCR1; this interaction negatively regulates Tat transactivation activity by altering its subcellular distribution. Asymmetrical arginine methylation by host PRMT6 seems to diminish the transactivation capacity of Tat and affects the interaction with host CCNT1. In terms of processing, acetylation by EP300, CREBBP, GCN5L2/GCN5 and PCAF regulates the transactivation activity of Tat. EP300-mediated acetylation of Lys-50 promotes dissociation of Tat from the TAR RNA through the competitive binding to PCAF's bromodomain. In addition, the non-acetylated Tat's N-terminus can also interact with PCAF. PCAF-mediated acetylation of Lys-28 enhances Tat's binding to CCNT1. Lys-50 is deacetylated by SIRT1. Post-translationally, polyubiquitination by host MDM2 does not target Tat to degradation, but activates its transactivation function and fosters interaction with CCNT1 and TAR RNA. Phosphorylated by EIF2AK2 on serine and threonine residues adjacent to the basic region important for TAR RNA binding and function. Phosphorylation of Tat by EIF2AK2 is dependent on the prior activation of EIF2AK2 by dsRNA.

It is found in the host nucleus. Its subcellular location is the host nucleolus. The protein localises to the host cytoplasm. It localises to the secreted. In terms of biological role, transcriptional activator that increases RNA Pol II processivity, thereby increasing the level of full-length viral transcripts. Recognizes a hairpin structure at the 5'-LTR of the nascent viral mRNAs referred to as the transactivation responsive RNA element (TAR) and recruits the cyclin T1-CDK9 complex (P-TEFb complex) that will in turn hyperphosphorylate the RNA polymerase II to allow efficient elongation. The CDK9 component of P-TEFb and other Tat-activated kinases hyperphosphorylate the C-terminus of RNA Pol II that becomes stabilized and much more processive. Other factors such as HTATSF1/Tat-SF1, SUPT5H/SPT5, and HTATIP2 are also important for Tat's function. Besides its effect on RNA Pol II processivity, Tat induces chromatin remodeling of proviral genes by recruiting the histone acetyltransferases (HATs) CREBBP, EP300 and PCAF to the chromatin. This also contributes to the increase in proviral transcription rate, especially when the provirus integrates in transcriptionally silent region of the host genome. To ensure maximal activation of the LTR, Tat mediates nuclear translocation of NF-kappa-B by interacting with host RELA. Through its interaction with host TBP, Tat may also modulate transcription initiation. Tat can reactivate a latently infected cell by penetrating in it and transactivating its LTR promoter. In the cytoplasm, Tat is thought to act as a translational activator of HIV-1 mRNAs. Extracellular circulating Tat can be endocytosed by surrounding uninfected cells via the binding to several surface receptors such as CD26, CXCR4, heparan sulfate proteoglycans (HSPG) or LDLR. Neurons are rarely infected, but they internalize Tat via their LDLR. Through its interaction with nuclear HATs, Tat is potentially able to control the acetylation-dependent cellular gene expression. Modulates the expression of many cellular genes involved in cell survival, proliferation or in coding for cytokines or cytokine receptors. Tat plays a role in T-cell and neurons apoptosis. Tat induced neurotoxicity and apoptosis probably contribute to neuroAIDS. Circulating Tat also acts as a chemokine-like and/or growth factor-like molecule that binds to specific receptors on the surface of the cells, affecting many cellular pathways. In the vascular system, Tat binds to ITGAV/ITGB3 and ITGA5/ITGB1 integrins dimers at the surface of endothelial cells and competes with bFGF for heparin-binding sites, leading to an excess of soluble bFGF. This Homo sapiens (Human) protein is Protein Tat.